The sequence spans 124 residues: Small ribosomal subunit protein uS12 (124 aa).

Residue Asp89 is modified to 3-methylthioaspartic acid.

The protein belongs to the universal ribosomal protein uS12 family. In terms of assembly, part of the 30S ribosomal subunit. Contacts proteins S8 and S17. May interact with IF1 in the 30S initiation complex.

With S4 and S5 plays an important role in translational accuracy. In terms of biological role, interacts with and stabilizes bases of the 16S rRNA that are involved in tRNA selection in the A site and with the mRNA backbone. Located at the interface of the 30S and 50S subunits, it traverses the body of the 30S subunit contacting proteins on the other side and probably holding the rRNA structure together. The combined cluster of proteins S8, S12 and S17 appears to hold together the shoulder and platform of the 30S subunit. This is Small ribosomal subunit protein uS12 from Acinetobacter baylyi (strain ATCC 33305 / BD413 / ADP1).